A 355-amino-acid polypeptide reads, in one-letter code: Cyclic nucleotide-gated potassium channel mll3241 (355 aa).

Topologically, residues 1–12 (MSVLPFLRIYAP) are cytoplasmic. Residues 13 to 30 (LNAVLAAPGLLAVAALTI) traverse the membrane as a helical segment. Residues 31–38 (PDMSGRSR) lie on the Periplasmic side of the membrane. Residues 39-61 (LALAALLAVIWGAYLLQLAATLL) form a helical membrane-spanning segment. The Cytoplasmic segment spans residues 62-74 (KRRAGVVRDRTPK). A helical transmembrane segment spans residues 75 to 94 (IAIDVLAVLVPLAAFLLDGS). Residues 95-112 (PDWSLYCAVWLLKPLRDS) form a helical membrane-spanning segment. At 113-129 (TFFPVLGRVLANEARNL) the chain is on the cytoplasmic side. Residues 130-150 (IGVTTLFGVVLFAVALAAYVI) form a helical membrane-spanning segment. At 151 to 161 (ERDIQPEKFGS) the chain is on the periplasmic side. The pore-forming intramembrane region spans 162-180 (IPQAMWWAVVTLSTTGYGD). The Selectivity filter motif lies at 175–180 (TTGYGD). At 181 to 185 (TIPQS) the chain is on the periplasmic side. Residues 186 to 210 (FAGRVLAGAVMMSGIGIFGLWAGIL) form a helical membrane-spanning segment. Residues 211–355 (ATGFYQEVRR…LERRGAAASA (145 aa)) lie on the Cytoplasmic side of the membrane. Residues 297-298 (GE), 307-308 (RS), and R348 each bind 3',5'-cyclic AMP.

This sequence belongs to the potassium channel family. In terms of assembly, homotetramer.

The protein localises to the cell membrane. Cyclic nucleotide-regulated potassium channel activated by cAMP. The polypeptide is Cyclic nucleotide-gated potassium channel mll3241 (Mesorhizobium japonicum (strain LMG 29417 / CECT 9101 / MAFF 303099) (Mesorhizobium loti (strain MAFF 303099))).